A 370-amino-acid polypeptide reads, in one-letter code: Coproporphyrin III ferrochelatase (370 aa).

2 residues coordinate Fe-coproporphyrin III: Ser-58 and Tyr-127. Positions 189 and 276 each coordinate Fe(2+).

This sequence belongs to the ferrochelatase family.

It localises to the cytoplasm. It catalyses the reaction Fe-coproporphyrin III + 2 H(+) = coproporphyrin III + Fe(2+). Its pathway is porphyrin-containing compound metabolism; protoheme biosynthesis. Involved in coproporphyrin-dependent heme b biosynthesis. Catalyzes the insertion of ferrous iron into coproporphyrin III to form Fe-coproporphyrin III. This Corynebacterium glutamicum (strain ATCC 13032 / DSM 20300 / JCM 1318 / BCRC 11384 / CCUG 27702 / LMG 3730 / NBRC 12168 / NCIMB 10025 / NRRL B-2784 / 534) protein is Coproporphyrin III ferrochelatase.